The chain runs to 304 residues: Cytochrome c biogenesis protein CcsA (304 aa).

Helical transmembrane passes span 8 to 28, 37 to 57, 63 to 83, 96 to 116, 141 to 161, 212 to 232, 246 to 263, and 275 to 295; these read LVTS…PIAF, PGVV…QLVL, GHFP…ACTL, IVAA…SFAL, VIMV…AVLV, TITV…VWAN, TWAL…HTRL, and VAVV…LLGI.

This sequence belongs to the CcmF/CycK/Ccl1/NrfE/CcsA family. May interact with ccs1.

The protein localises to the cellular thylakoid membrane. Required during biogenesis of c-type cytochromes (cytochrome c6 and cytochrome f) at the step of heme attachment. This Synechococcus sp. (strain CC9902) protein is Cytochrome c biogenesis protein CcsA.